Consider the following 3788-residue polypeptide: MSTDSNSLAREFLIDVNQLCNAVVQRAEAREEEEEETHMATLGQYLVHGRGFLLLTKLNSIIDQALTCREELLTLLLSLLPLVWKIPVQEQQATDFNLPLSSDIILTKEKNSSLQKSTQGKLYLEGSAPSGQVSAKVNLFRKIRRQRKSTHRYSVRDARKTQLSTSDSEGNSDEKSTVVSKHRRLHALPRFLTQSPKEGHLVAKPDPSATKEQVLSDTMSVENSREVILRQDSNGDILSEPAALSILSNMNNSPFDLCHVLLSLLEKVCKFDIALNHNSSLALSVVPTLTEFLAGFGDCCNQSDTLEGQLVSAGWTEEPVALVQRMLFRTVLHLMSVDVSTAEAMPESLRKNLTELLRAALKIRACLEKQPEPFSPRQKKTLQEVQEGFVFSKYRHRALLLPELLEGVLQLLISCLQSAASNPFYFSQAMDLVQEFIQHQGFNLFGTAVLQMEWLLTRDGVPSEAAEHLKALINSVIKIMSTVKKVKSEQLHHSMCTRKRHRRCEYSHFMQHHRDLSGLLVSAFKNQLSKSPFEETAEGDVQYPERCCCIAVCAHQCLRLLQQVSLSTTCVQILSGVHSVGICCCMDPKSVIAPLLHAFKLPALKAFQQHILNVLSKLLVDQLGGAELSPRIKKAACNICTVDSDQLAKLGETLQGTLCGAGPTSGLPSPSYRFQGILPSSGSEDLLWKWDALEAYQSFVFQEDRLHNIQIANHICNLLQKGNVVVQWKLYNYIFNPVLQRGVELVHHCQQLSIPSAQTHMCSQLKQYLPQEVLQIYLKTLPVLLKSRVIRDLFLSCNGVNHIIELNYLDGIRSHSLKAFETLIVSLGEQQKDAAVLDVDGLDIQQELPSLSVGPSLHKQQASSDSPCSLRKFYASLREPDPKKRKTIHQDVHINTINLFLCVAFLCVSKEADSDRESANESEDTSGYDSPPSEPLSHMLPCLSLEDVVLPSPECLHHAADIWSMCRWIYMLNSVFQKQFHRLGGFQVCHELIFMIIQKLFRSHTEDQGRRQGEMSRNENQELIRISYPELTLKGDVSSATAPDLGFLRKSADSVRGFQSQPVLPTSAEQIVATESVPGERKAFMSQQSETSLQSIRLLESLLDICLHSARACQQKMELELPSQGLSVENILCELREHLSQSKVAETELAKPLFDALLRVALGNHSADLGPGDAVTEKSHPSEEELLSQPGDFSEEAEDSQCCSLKLLGEEEGYEADSESNPEDVDTQDDGVELNPEAEGFSGSIVSNNLLENLTHGEIIYPEICMLGLNLLSASKAKLDVLAHVFESFLKIVRQKEKNISLLIQQGTVKILLGGFLNILTQTNSDFQACQRVLVDLLVSLMSSRTCSEDLTLLWRIFLEKSPCTEILLLGIHKIVESDFTMSPSQCLTFPFLHTPSLSNGVLSQKPPGILNSKALGLLRRARISRGKKEADRESFPYRLLSSWHIAPIHLPLLGQNCWPHLSEGFSVSLVGLMWNTSNESESAAERGKRVKKRNKPSVLEDSSFEGAEGDRPEVTESINPGDRLIEDGCIHLISLGSKALMIQVWADPHSGTFIFRVCMDSNDDTKAVSLAQVESQENIFFPSKWQHLVLTYIQHPQGKKNVHGEISIWVSGQRKTDVILDFVLPRKTSLSSDSNKTFCMIGHCLTSQEESLQLAGKWDLGNLLLFNGAKIGSQEAFFLYACGPNYTSIMPCKYGQPVIDYSKYINKDILRCDEIRDLFMTKKEVDVGLLIESLSVVYTTCCPAQYTIYEPVIRLKGQVKTQPSQRPFSSKEAQSILLEPSQLKGLQPTECKAIQGILHEIGGAGTFVFLFARVVELSSCEETQALALRVILSLIKYSQQRTQELENCNGLSMIHQVLVKQKCIVGFHILKTLLEGCCGEEVIHVSEHGEFKLDVESHAIIQDVKLLQELLLDWKIWNKAEQGVWETLLAALEVLIRVEHHQQQFNIKQLLNAHVVHHFLLTCQVLQEHREGQLTSMPREVCRSFVKIIAEVLGSPPDLELLTVIFNFLLAVHPPTNTYVCHNPTNFYFSLHIDGKIFQEKVQSLAYLRHSSSGGQAFPSPGFLVISPSAFTAAPPEGTSSSNIVPQRMAAQMVRSRSLPAFPTYLPLIRAQKLAASLGFSVDKLQNIADANPEKQNLLGRPYALKTSKEEAFISSCESAKTVCEMEALLGAHASANGVSRGSPRFPRARVDHKDVGTEPRSDDDSPGDESYPRRPDNLKGLASFQRSQSTVASLGLAFPSQNGSAVASRWPSLVDRNADDWENFTFSPAYEASYNRATSTHSVIEDCLIPICCGLYELLSGVLLVLPDAMLEDVMDRIIQADILLVLVNHPSPAIQQGVIKLLHAYINRASKEQKDKFLKNRGFSLLANQLYLHRGTQELLECFVEMFFGRPIGLDEEFDLEEVKHMELFQKWSVIPVLGLIETSLYDNVLLHNALLLLLQVLNSCSKVADMLLDNGLLYVLCNTVAALNGLEKNIPVNEYKLLACDIQQLFIAVTIHACSSSGTQYFRVIEDLIVLLGYLHNSKNKRTQNMALALQLRVLQAALEFIRSTANHDSESPVHSPSAHRHSVPPKRRSIAGSRKFPLAQTESLLMKMRSVASDELHSMMQRRMSQEHPSQASEAELAQRLQRLTILAVNRIIYQELNSDIIDILRTPENTSQSKTSVSQTEISEEDMHHEQPSVYNPFQKEMLTYLLDGFKVCIGSSKTSVSKQQWTKILGSCKETLRDQLGRLLAHILSPTHTVQERKQILEIVHEPAHQDILRDCLSPSPQHGAKLVLYLSELIHNHQDELSEEEMDTAELLMNALKLCGHKCIPPSAPSKPELIKIIREEQKKYESEESVSKGSWQKTVNNNQQSLFQRLDFKSKDISKIAADITQAVSLSQGIERKKVIQHIRGMYKVDLSASRHWQECIQQLTHDRAVWYDPIYYPTSWQLDPTEGPNRERRRLQRCYLTIPNKYLLRDRQKSEGVLRPPLSYLFEDKTHSSFSSTVKDKAASESIRVNRRCISVAPSRETAGELLLGKCGMYFVEDNASDAVESSSLQGELEPASFSWTYEEIKEVHRRWWQLRDNAVEIFLTNGRTLLLAFDNNKVRDDVYQSILTNNLPNLLEYGNITALTNLWYSGQITNFEYLTHLNKHAGRSFNDLMQYPVFPFILSDYVSETLDLNDPSIYRNLSKPIAVQYKEKEDRYVDTYKYLEEEYRKGAREDDPMPPVQPYHYGSHYSNSGTVLHFLVRMPPFTKMFLAYQDQSFDIPDRTFHSTNTTWRLSSFESMTDVKELIPEFFYLPEFLVNREGFDFGVRQNGERVNHVNLPPWARNDPRLFILIHRQALESDHVSQNICHWIDLVFGYKQKGKASVQAINVFHPATYFGMDVSAVEDPVQRRALETMIKTYGQTPRQLFHTAHASRPGAKLNIEGELPAAVGLLVQFAFRETREPVKEVTHPSPLSWIKGLKWGEYVGSPSAPVPVVCFSQPHGERFGSLQALPTRAICGLSRNFCLLMTYNKEQGVRSMNNTNIQWSAILSWGYADNILRLKSKQSEPPINFIQSSQQHQVTSCAWVPDSCQLFTGSKCGVITAYTNRLTSSTPSEIEMESQMHLYGHTEEITGLCVCKPYSVMISVSRDGTCIVWDLNRLCYVQSLAGHKSPVTAVSASETSGDIATVCDSAGGGSDLRLWTVNGDLVGHVHCREIICSVAFSNQPEGVSINVIAGGLENGIVRLWSTWDLKPVREITFPKSNKPIISLTFSCDGHHLYTANSEGTVIAWCRKDQQRVKLPMFYSFLSSYAAG.

Disordered stretches follow at residues 148–180 (KSTH…TVVS) and 198–217 (EGHL…VLSD). The residue at position 164 (serine 164) is a Phosphoserine. Phosphothreonine is present on threonine 165. A Phosphoserine modification is found at serine 166. One copy of the WD 1 repeat lies at 662-700 (GPTSGLPSPSYRFQGILPSSGSEDLLWKWDALEAYQSFV). Disordered regions lie at residues 1169-1196 (LGPG…FSEE), 1213-1240 (GYEA…EAEG), and 1482-1519 (ESAA…TESI). Acidic residues predominate over residues 1213–1232 (GYEADSESNPEDVDTQDDGV). Phosphoserine is present on residues serine 1503 and serine 1504. One copy of the WD 2 repeat lies at 1576–1620 (SQENIFFPSKWQHLVLTYIQHPQGKKNVHGEISIWVSGQRKTDVI). Phosphoserine is present on residues serine 2099, serine 2118, serine 2203, serine 2207, and serine 2254. The segment at 2177–2221 (ANGVSRGSPRFPRARVDHKDVGTEPRSDDDSPGDESYPRRPDNLK) is disordered. Basic and acidic residues predominate over residues 2190 to 2205 (ARVDHKDVGTEPRSDD). Disordered regions lie at residues 2556–2581 (HDSE…SIAG) and 2659–2681 (NTSQ…HHEQ). Residues 2566–2578 (SAHRHSVPPKRRS) show a composition bias toward basic residues. Polar residues predominate over residues 2659 to 2671 (NTSQSKTSVSQTE). A BEACH-type PH domain is found at 2996–3102 (AASESIRVNR…VRDDVYQSIL (107 aa)). One can recognise a BEACH domain in the interval 3126–3409 (QITNFEYLTH…QLFHTAHASR (284 aa)). WD repeat units follow at residues 3550–3589 (SQQH…STPS), 3601–3640 (GHTE…YVQS), 3643–3686 (GHKS…VGHV), 3687–3731 (HCRE…PVRE), and 3736–3775 (KSNK…RVKL).

In terms of assembly, interacts with CPAP, LIP8 and ZNF521. As to expression, expressed in the heart, lung, liver, spleen, brain and in different immune cell types (purified B and T lymphocytes, bone marrow-derived macrophages and dendritic cells).

The protein resides in the cytoplasm. In terms of biological role, adapter protein that regulates and/or fission of intracellular vesicles such as lysosomes. Might regulate trafficking of effectors involved in exocytosis. In cytotoxic T-cells and natural killer (NK) cells, has role in the regulation of size, number and exocytosis of lytic granules. In macrophages and dendritic cells, regulates phagosome maturation by controlling the conversion of early phagosomal compartments into late phagosomes. In macrophages and dendritic cells, specifically involved in TLR3- and TLR4-induced production of pro-inflammatory cytokines by regulating the endosomal TLR3- TICAM1/TRIF and TLR4- TICAM1/TRIF signaling pathways. This Mus musculus (Mouse) protein is Lysosomal-trafficking regulator (Lyst).